The primary structure comprises 419 residues: E3 ubiquitin-protein ligase RNF130 (419 aa).

A signal peptide spans 1–27 (MSGAARAGPARLAALALLTCSLWPTRA). Over 28 to 194 (DNASQEYYTA…MPPKNFSRGS (167 aa)) the chain is Extracellular. N-linked (GlcNAc...) asparagine glycans are attached at residues Asn29, Asn40, Asn112, Asn135, Asn172, and Asn189. In terms of domain architecture, PA spans 105-176 (IALLQRGNCT…SYLEKNISVQ (72 aa)). The chain crosses the membrane as a helical span at residues 195-217 (LVFVSISFIVLMIISSAWLIFYF). Over 218–419 (IQKIRYTNAR…SLNANEVEWF (202 aa)) the chain is Cytoplasmic. An RING-type zinc finger spans residues 264-305 (CAVCIESYKQNDVVRVLPCKHVFHKSCVDPWLSEHCTCPMCK).

Expression is highest in liver, with lesser amounts in the lung, spleen, brain, heart, kidney and testis.

Its subcellular location is the membrane. It is found in the cytoplasm. It carries out the reaction S-ubiquitinyl-[E2 ubiquitin-conjugating enzyme]-L-cysteine + [acceptor protein]-L-lysine = [E2 ubiquitin-conjugating enzyme]-L-cysteine + N(6)-ubiquitinyl-[acceptor protein]-L-lysine.. It participates in protein modification; protein ubiquitination. Functionally, acts as an E3 ubiquitin-protein ligase. May have a role during the programmed cell death of hematopoietic cells. The protein is E3 ubiquitin-protein ligase RNF130 of Mus musculus (Mouse).